We begin with the raw amino-acid sequence, 496 residues long: Probable E3 ubiquitin-protein ligase ARI12 (496 aa).

The TRIAD supradomain stretch occupies residues 110–319 (NEYFCGACGE…GDLHFCTFDA (210 aa)). Zn(2+)-binding residues include Cys-114, Cys-117, Cys-131, His-133, Cys-136, Cys-139, Cys-162, Cys-172, Cys-240, Cys-243, His-248, Cys-253, Cys-267, Cys-270, Cys-286, and Cys-289. The RING-type 1 zinc finger occupies 114–172 (CGACGESHPHKNLASVSCGHRICTRCWTSHINKIISEKPAAEWNLWLKCPVRVGLHASC). An IBR-type zinc finger spans residues 191–253 (FNYNQYLLRS…REDAHSPVDC (63 aa)). Residues 267 to 297 (CPKCKLRIPRNQDNSLKMKCLPCNYVFCWFC) form an RING-type 2; atypical zinc finger.

This sequence belongs to the RBR family. Ariadne subfamily. Requires Zn(2+) as cofactor. In terms of tissue distribution, preferentially expressed in roots.

It carries out the reaction [E2 ubiquitin-conjugating enzyme]-S-ubiquitinyl-L-cysteine + [acceptor protein]-L-lysine = [E2 ubiquitin-conjugating enzyme]-L-cysteine + [acceptor protein]-N(6)-ubiquitinyl-L-lysine.. Its pathway is protein modification; protein ubiquitination. Might act as an E3 ubiquitin-protein ligase, or as part of E3 complex, which accepts ubiquitin from specific E2 ubiquitin-conjugating enzymes and then transfers it to substrates. The polypeptide is Probable E3 ubiquitin-protein ligase ARI12 (ARI12) (Arabidopsis thaliana (Mouse-ear cress)).